Consider the following 283-residue polypeptide: Cyclin-C (283 aa).

Residues 46-144 enclose the Cyclin N-terminal domain; it reads NVIQALGEHL…ILECEFYLLE (99 aa). Residues 252–283 form a disordered region; the sequence is TILSKMPKPKPPPNSEGEQGPNGSQNSSYSQS. The segment covering 272–283 has biased composition (polar residues); the sequence is PNGSQNSSYSQS.

Belongs to the cyclin family. Cyclin C subfamily. In terms of assembly, component of the Mediator complex. The cylin/CDK pair formed by CCNC/CDK8 also associates with the large subunit of RNA polymerase II.

It localises to the nucleus. Functionally, component of the Mediator complex, a coactivator involved in regulated gene transcription of nearly all RNA polymerase II-dependent genes. Mediator functions as a bridge to convey information from gene-specific regulatory proteins to the basal RNA polymerase II transcription machinery. Mediator is recruited to promoters by direct interactions with regulatory proteins and serves as a scaffold for the assembly of a functional preinitiation complex with RNA polymerase II and the general transcription factors. Binds to and activates cyclin-dependent kinase CDK8 that phosphorylates the CTD (C-terminal domain) of the large subunit of RNA polymerase II (RNAp II), which may inhibit the formation of a transcription initiation complex. The polypeptide is Cyclin-C (CCNC) (Gallus gallus (Chicken)).